The chain runs to 494 residues: Putative bifunctional dihydrofolate reductase-thymidylate synthase (494 aa).

In terms of domain architecture, DHFR spans 1–167 (MGIGKDGTLP…IKHSFISFVR (167 aa)). 2–8 (GIGKDGT) is an NADP(+) binding site. Asp-16 lines the substrate pocket. Residues 40 to 42 (RKT) and 61 to 64 (LTRS) contribute to the NADP(+) site. Ile-103 serves as a coordination point for substrate. 104–111 (GGGEILRQ) is a binding site for NADP(+). Residue Thr-124 coordinates substrate. Positions 170–494 (KSIAEANDSS…HHKIEMKMAV (325 aa)) are thymidylate synthase. Arg-231 serves as a coordination point for dUMP. Residue Cys-376 is part of the active site. DUMP-binding positions include His-377, 395–399 (QRSAD), Asn-407, and 437–439 (HVY).

It in the N-terminal section; belongs to the dihydrofolate reductase family. This sequence in the C-terminal section; belongs to the thymidylate synthase family.

It catalyses the reaction (6S)-5,6,7,8-tetrahydrofolate + NADP(+) = 7,8-dihydrofolate + NADPH + H(+). The enzyme catalyses dUMP + (6R)-5,10-methylene-5,6,7,8-tetrahydrofolate = 7,8-dihydrofolate + dTMP. It functions in the pathway cofactor biosynthesis; tetrahydrofolate biosynthesis; 5,6,7,8-tetrahydrofolate from 7,8-dihydrofolate: step 1/1. In terms of biological role, bifunctional enzyme. Involved in de novo dTMP biosynthesis. Key enzyme in folate metabolism. Can play two different roles depending on the source of dihydrofolate: de novo synthesis of tetrahydrofolate or recycling of the dihydrofolate released as one of the end products of the TS catalyzed reaction. Catalyzes an essential reaction for de novo glycine and purine synthesis, DNA precursor synthesis, and for the conversion of dUMP to dTMP. The sequence is that of Putative bifunctional dihydrofolate reductase-thymidylate synthase from Oryza sativa subsp. japonica (Rice).